We begin with the raw amino-acid sequence, 118 residues long: NADPH-dependent 7-cyano-7-deazaguanine reductase (118 aa).

Cys-31 (thioimide intermediate) is an active-site residue. Asp-38 functions as the Proton donor in the catalytic mechanism. Substrate is bound by residues 53 to 55 and 72 to 73; these read IEL and YE.

This sequence belongs to the GTP cyclohydrolase I family. QueF type 1 subfamily.

It localises to the cytoplasm. It carries out the reaction 7-aminomethyl-7-carbaguanine + 2 NADP(+) = 7-cyano-7-deazaguanine + 2 NADPH + 3 H(+). The protein operates within tRNA modification; tRNA-queuosine biosynthesis. In terms of biological role, catalyzes the NADPH-dependent reduction of 7-cyano-7-deazaguanine (preQ0) to 7-aminomethyl-7-deazaguanine (preQ1). In Prosthecochloris aestuarii (strain DSM 271 / SK 413), this protein is NADPH-dependent 7-cyano-7-deazaguanine reductase.